Here is a 615-residue protein sequence, read N- to C-terminus: Probable methylmalonyl-CoA mutase small subunit (615 aa).

This sequence belongs to the methylmalonyl-CoA mutase family. Heterodimer of an alpha and a beta chain. Adenosylcob(III)alamin is required as a cofactor.

The enzyme catalyses (R)-methylmalonyl-CoA = succinyl-CoA. It participates in metabolic intermediate metabolism; propanoyl-CoA degradation; succinyl-CoA from propanoyl-CoA: step 3/3. Functionally, catalyzes the isomerization of succinyl-CoA to methylmalonyl-CoA during synthesis of propionate from tricarboxylic acid-cycle intermediates. This is Probable methylmalonyl-CoA mutase small subunit (mutA) from Mycobacterium bovis (strain ATCC BAA-935 / AF2122/97).